Consider the following 255-residue polypeptide: Thiazole synthase (255 aa).

Lys95 acts as the Schiff-base intermediate with DXP in catalysis. 1-deoxy-D-xylulose 5-phosphate contacts are provided by residues Gly156, 182 to 183, and 204 to 205; these read AG and NT.

It belongs to the ThiG family. As to quaternary structure, homotetramer. Forms heterodimers with either ThiH or ThiS.

The protein localises to the cytoplasm. It catalyses the reaction [ThiS sulfur-carrier protein]-C-terminal-Gly-aminoethanethioate + 2-iminoacetate + 1-deoxy-D-xylulose 5-phosphate = [ThiS sulfur-carrier protein]-C-terminal Gly-Gly + 2-[(2R,5Z)-2-carboxy-4-methylthiazol-5(2H)-ylidene]ethyl phosphate + 2 H2O + H(+). Its pathway is cofactor biosynthesis; thiamine diphosphate biosynthesis. In terms of biological role, catalyzes the rearrangement of 1-deoxy-D-xylulose 5-phosphate (DXP) to produce the thiazole phosphate moiety of thiamine. Sulfur is provided by the thiocarboxylate moiety of the carrier protein ThiS. In vitro, sulfur can be provided by H(2)S. This chain is Thiazole synthase, found in Vibrio campbellii (strain ATCC BAA-1116).